The following is a 384-amino-acid chain: MVMDAGKKREAGALLPEEAFETGAPEGTLGAEEELWLADPETLKLAGGAQKILAAEPAEHFSGELIDCEVEANTGVHREAAGVARDLLARRRTLLEHAGRLGRVLGTSGTHPLGDWREQEIIDKPHYQYLKRKLGWLIRRNNTFSLHVHYAVQGKEKVIYLFDRIREYVPHFLAVSVNSPFWQGEFTDTRSARALVFSRSLPHAGMPEAFGSWSAYAGYLDFVGRPGVIRRLGEIWWDIRPHPRLSTLEIRAFDAQTDPARSEALISLAAATCDMLCAEYESGELRPARPVREIEDNKWSAQRHGLDGLFVDHETHEPVPARWAVERLAELAASSSRRDLSSLERLLEEPTESERQLLVWRETGSVKEVARDIARRTRAAIPAT.

This sequence belongs to the glutamate--cysteine ligase type 2 family. YbdK subfamily.

The enzyme catalyses L-cysteine + L-glutamate + ATP = gamma-L-glutamyl-L-cysteine + ADP + phosphate + H(+). Its function is as follows. ATP-dependent carboxylate-amine ligase which exhibits weak glutamate--cysteine ligase activity. The sequence is that of Putative glutamate--cysteine ligase 2-2 from Rubrobacter xylanophilus (strain DSM 9941 / JCM 11954 / NBRC 16129 / PRD-1).